Here is a 245-residue protein sequence, read N- to C-terminus: Probable phosphatase YcdX (245 aa).

Residues His-7, His-9, His-15, His-40, Glu-73, His-101, His-131, Asp-192, and His-194 each coordinate Zn(2+).

Belongs to the PHP family. In terms of assembly, homotrimer. Requires Zn(2+) as cofactor.

The polypeptide is Probable phosphatase YcdX (Salmonella heidelberg (strain SL476)).